The sequence spans 509 residues: Anaerobic nitric oxide reductase transcription regulator NorR (509 aa).

At Asp56 the chain carries 4-aspartylphosphate. The Sigma-54 factor interaction domain occupies 186 to 415 (MIGRSPAMDR…LEHAIHRAAV (230 aa)). Residues 214 to 221 (GETGVGKE) and 277 to 286 (ADKGTLFLDE) each bind ATP. Positions 484–503 (WAATARALEMDGGNLHRLAR) form a DNA-binding region, H-T-H motif.

Its pathway is nitrogen metabolism; nitric oxide reduction. In terms of biological role, required for the expression of anaerobic nitric oxide (NO) reductase, acts as a transcriptional activator for at least the norVW operon. Activation also requires sigma-54. The polypeptide is Anaerobic nitric oxide reductase transcription regulator NorR (Aeromonas salmonicida (strain A449)).